We begin with the raw amino-acid sequence, 1067 residues long: Receptor-type guanylate cyclase gcy-10 (1067 aa).

Positions 1–20 (MLKSLLIIVIVFLHRELCDG) are cleaved as a signal peptide. Residues 21–438 (IQLILFDNWP…CVAKSSCVNY (418 aa)) lie on the Extracellular side of the membrane. Asn411 carries N-linked (GlcNAc...) asparagine glycosylation. A helical transmembrane segment spans residues 439–459 (IPHIIAAVVIVTIIVIAIVII). At 460–1067 (VKQRRHKLNI…RGSIVPLQKA (608 aa)) the chain is on the cytoplasmic side. Residues 509–791 (ALTSRRRVFG…ESISTVYPLS (283 aa)) form the Protein kinase domain. Residues 515 to 523 (RVFGSYALV) and Lys534 contribute to the ATP site. The region spanning 859-989 (TVMFVQICDF…DTVNFASRMQ (131 aa)) is the Guanylate cyclase domain.

It belongs to the adenylyl cyclase class-4/guanylyl cyclase family. Expressed predominantly in AWC but also in AWB, ASI, ASJ and ASK sensory neurons and in I1 interneuron.

Its subcellular location is the cell membrane. It localises to the cell projection. The protein resides in the cilium. The catalysed reaction is GTP = 3',5'-cyclic GMP + diphosphate. Functionally, guanylate cyclase involved in the production of the second messenger cGMP. Regulates chemotaxis responses toward volatile odorants in AWC sensory neurons and their avoidance in AWB sensory neurons. May be involved in sensitivity to quinine by regulating egl-4 activity through the production of cGMP. Involved in phototransduction in ASJ neurons downstream of G protein coupled-photoreceptor lite-1. Required to maintain the expression of putative olfactory receptor str-2 in AWC neurons in adults. In AWB and AWC sensory neurons, mediates the recognition of food oders which subsequently allows for the detection of preferred food sources. Involved in AWB sensory neuron development and extension during postembryonic development, potentially via mediating localization of tub-1 and PI(4,5)P2 to membrane cilia. This chain is Receptor-type guanylate cyclase gcy-10, found in Caenorhabditis elegans.